A 164-amino-acid polypeptide reads, in one-letter code: Ribosome maturation factor RimP (164 aa).

Belongs to the RimP family.

The protein localises to the cytoplasm. Its function is as follows. Required for maturation of 30S ribosomal subunits. The protein is Ribosome maturation factor RimP of Thermodesulfovibrio yellowstonii (strain ATCC 51303 / DSM 11347 / YP87).